We begin with the raw amino-acid sequence, 330 residues long: o-succinylbenzoate synthase (330 aa).

Catalysis depends on Lys130, which acts as the Proton donor. Mg(2+) is bound by residues Asp155, Glu184, and Asp206. Catalysis depends on Lys228, which acts as the Proton acceptor.

The protein belongs to the mandelate racemase/muconate lactonizing enzyme family. MenC type 1 subfamily. In terms of assembly, monomer. It depends on a divalent metal cation as a cofactor.

It carries out the reaction (1R,6R)-6-hydroxy-2-succinyl-cyclohexa-2,4-diene-1-carboxylate = 2-succinylbenzoate + H2O. It functions in the pathway quinol/quinone metabolism; 1,4-dihydroxy-2-naphthoate biosynthesis; 1,4-dihydroxy-2-naphthoate from chorismate: step 4/7. It participates in cofactor biosynthesis; phylloquinone biosynthesis. In terms of biological role, converts 2-succinyl-6-hydroxy-2,4-cyclohexadiene-1-carboxylate (SHCHC) to 2-succinylbenzoate (OSB). Does not show N-succinylamino acid racemase (NSAR) activity with N-succinyl-L-phenylglycine as substrate. The polypeptide is o-succinylbenzoate synthase (Bdellovibrio bacteriovorus (strain ATCC 15356 / DSM 50701 / NCIMB 9529 / HD100)).